A 261-amino-acid chain; its full sequence is Ribosomal RNA small subunit methyltransferase J (261 aa).

Residues 111-112 (RD), 127-128 (ER), 163-164 (SS), and D181 each bind S-adenosyl-L-methionine.

It belongs to the methyltransferase superfamily. RsmJ family.

It localises to the cytoplasm. It carries out the reaction guanosine(1516) in 16S rRNA + S-adenosyl-L-methionine = N(2)-methylguanosine(1516) in 16S rRNA + S-adenosyl-L-homocysteine + H(+). Its function is as follows. Specifically methylates the guanosine in position 1516 of 16S rRNA. The sequence is that of Ribosomal RNA small subunit methyltransferase J from Shewanella sp. (strain MR-4).